The primary structure comprises 412 residues: Gamma-glutamyl phosphate reductase (412 aa).

This sequence belongs to the gamma-glutamyl phosphate reductase family.

Its subcellular location is the cytoplasm. It carries out the reaction L-glutamate 5-semialdehyde + phosphate + NADP(+) = L-glutamyl 5-phosphate + NADPH + H(+). It participates in amino-acid biosynthesis; L-proline biosynthesis; L-glutamate 5-semialdehyde from L-glutamate: step 2/2. In terms of biological role, catalyzes the NADPH-dependent reduction of L-glutamate 5-phosphate into L-glutamate 5-semialdehyde and phosphate. The product spontaneously undergoes cyclization to form 1-pyrroline-5-carboxylate. This chain is Gamma-glutamyl phosphate reductase, found in Bartonella quintana (strain Toulouse) (Rochalimaea quintana).